The primary structure comprises 591 residues: Serine/threonine-protein kinase Nek2 (591 aa).

Positions 4–258 constitute a Protein kinase domain; that stretch reads YEVLEQIGKG…AAQLLKHPQL (255 aa). Residues 10 to 18 and Lys-33 each bind ATP; that span reads IGKGAFGSA. Catalysis depends on Asp-129, which acts as the Proton acceptor. Disordered regions lie at residues 309-331, 387-408, and 500-534; these read LGNE…SSTR, EPPK…TTPN, and RTDG…DTSS. 2 stretches are compositionally biased toward polar residues: residues 391–408 and 504–534; these read TSYN…TTPN and DNGS…DTSS.

The protein belongs to the protein kinase superfamily. NEK Ser/Thr protein kinase family. NIMA subfamily.

It carries out the reaction L-seryl-[protein] + ATP = O-phospho-L-seryl-[protein] + ADP + H(+). The catalysed reaction is L-threonyl-[protein] + ATP = O-phospho-L-threonyl-[protein] + ADP + H(+). Its function is as follows. May be involved in plant development processes. This Oryza sativa subsp. indica (Rice) protein is Serine/threonine-protein kinase Nek2 (NEK2).